Reading from the N-terminus, the 385-residue chain is 1-deoxy-D-xylulose 5-phosphate reductoisomerase (385 aa).

6 residues coordinate NADPH: Thr10, Gly11, Ser12, Ile13, Asn38, and Asn124. Lys125 provides a ligand contact to 1-deoxy-D-xylulose 5-phosphate. Glu126 provides a ligand contact to NADPH. Mn(2+) is bound at residue Asp150. Positions 151, 152, 176, and 199 each coordinate 1-deoxy-D-xylulose 5-phosphate. Glu152 is a binding site for Mn(2+). Residue Gly205 coordinates NADPH. 1-deoxy-D-xylulose 5-phosphate-binding residues include Ser212, Asn217, Lys218, and Glu221. Residue Glu221 coordinates Mn(2+).

It belongs to the DXR family. The cofactor is Mg(2+). Mn(2+) is required as a cofactor.

The enzyme catalyses 2-C-methyl-D-erythritol 4-phosphate + NADP(+) = 1-deoxy-D-xylulose 5-phosphate + NADPH + H(+). The protein operates within isoprenoid biosynthesis; isopentenyl diphosphate biosynthesis via DXP pathway; isopentenyl diphosphate from 1-deoxy-D-xylulose 5-phosphate: step 1/6. Catalyzes the NADPH-dependent rearrangement and reduction of 1-deoxy-D-xylulose-5-phosphate (DXP) to 2-C-methyl-D-erythritol 4-phosphate (MEP). The polypeptide is 1-deoxy-D-xylulose 5-phosphate reductoisomerase (Clostridium acetobutylicum (strain ATCC 824 / DSM 792 / JCM 1419 / IAM 19013 / LMG 5710 / NBRC 13948 / NRRL B-527 / VKM B-1787 / 2291 / W)).